A 377-amino-acid chain; its full sequence is Erythronate-4-phosphate dehydrogenase (377 aa).

Substrate-binding residues include Ser45 and Thr66. The NAD(+) site is built by Asp146 and Thr175. Residue Arg208 is part of the active site. Asp232 is an NAD(+) binding site. Glu237 is a catalytic residue. The active-site Proton donor is His254. Gly257 lines the NAD(+) pocket. Residue Tyr258 participates in substrate binding.

It belongs to the D-isomer specific 2-hydroxyacid dehydrogenase family. PdxB subfamily. In terms of assembly, homodimer.

It localises to the cytoplasm. It carries out the reaction 4-phospho-D-erythronate + NAD(+) = (R)-3-hydroxy-2-oxo-4-phosphooxybutanoate + NADH + H(+). It functions in the pathway cofactor biosynthesis; pyridoxine 5'-phosphate biosynthesis; pyridoxine 5'-phosphate from D-erythrose 4-phosphate: step 2/5. Functionally, catalyzes the oxidation of erythronate-4-phosphate to 3-hydroxy-2-oxo-4-phosphonooxybutanoate. This chain is Erythronate-4-phosphate dehydrogenase, found in Sodalis glossinidius (strain morsitans).